A 2131-amino-acid chain; its full sequence is MTGHEFKSWILELREILREIKNSHYFLDSWTQFNSVGSFIHIFFHQERFIKLFDSRIWSILLSHNSQGSTSNRYFTIKGVILFGVAVLIYRINNRNMVERKNLYLIGLLPIPMNSIGPRNDTLEESVGSSNINRLIVSLLYLPKGKKIYESSFLNPKESTWVLPITKKCSMPESNWGSRWWRDWIGKKSDSSCKISNETVAGIEILFKEKDLKYLEFVFVYYRDDPIRKDHGWEFFDRLSLRKRQNRINLNSGPLFEILVKHWICYLMSAFREKIPIEVEGFFKQQGAGSTIQSNDIEHVSHLFSRNKSRLFTEREKQMINHMLPEEIEEFLGNPTRSVRSFFSDRWSELHLGSNPTERSTRDQKLLKKQQDLSFLRRSEKKEMVNLFKIITYLQNTVSIHPISLDSGCDMVPKDEPDMDSSNKISFLNKNPFFDLFHLFHDRNRGGYTLHHDFESEDRFQEMADLFTLSITEPDLVYHKRFAFSIDSYGLDPKQFLNGVFNSRYEWKTTSLLVLFPIFYEENESFYRRIRKNRVRISCGNDLEEPKPKIVVFASNNIMEAVNQYRLIRNLIQIQHSTHRYIRNVLNRFFLMNRSDRNFEYGIQRDQIRKDTLNHRTLMKYTINQHLSNLKKSQKRWFDPLIFFYRTERSMNRDPDAYRYKWSTGSNNFQEHLEHFVSEQKSRLQVVFDRLRINPYSIDWSEVIDKKDLSKPLRFFLSKLLLFLSNSLPFLFVSFGNIPIHRSEIYIYQLKGPNDPQFLESIGLQIVHLKKLKPFLLDDHETCQKSKFLINGGTISPFLFNKIPKWMIDSFHTRNNRRKSFDNTDSYFSMIFHDQYNWLNPVKSFHRSSLRSSFYKGNQLRFLNNPHHFCFYCNKRFPFYVEKARINNYDFTYGQFLNILFIRNKIFSLCVGKKKHAFWGRDTISAIESQVSNIFIPKAFPQSGDETYNLYKSFHFPSRSNPFVRRAIYSIADISGTPLTEGQIVNFERTYCQPLSDMNLSDSEGKNLYQYLNFNSNMGLIHTPCSEKYLPSEKRKKRSLCLKKCVEKGQMYRTFQRDSAYSTLSKWNLFQTYMPWFLTSTGYRYLKFLFLDTFSDLLPILSSSQKFVSIFHDIMHGSDISWRILQKKFCLPQWNLISEISSKCFHNLLLSEEMIHRNNESPLISTHLTNVREFLYAILFLLLVAAYLVCTHLLFVFGASSELQAEFEKVKSLMIPSSMIELRKILDRYPTSEPNSFWLKNLFLVALKQLGDSLGGNMLLGGGPAYGVKSIRSKKKYLNINLIDIIDLISIIPNPINRITFSRNTRHLSHTSKEIYSLIRKRKNVNGDWIDDKIESWVANSDSIDDEKREFLVQFSTLTTEKRIDQILLSLTHSDHLSKNDSGYQMIEQPGAIYLRDLVDIHKKYLMNYEFNTSSLAERRIFLAHYQTITYSQTSCGANSFHFPSHGKPFSLRLALSLSRGILVIGSIGTGRSYLVKYLAKNSYLPFITVFLNKFLDNKSQGFDDIDIDDLDASDDLDASDDLDASDDLDASDDILDMELELLTSMNALTMNMMPEDEDQLYITLQFELAKAMSPCIIWIPNIHDLDVNESNYFSLGLLVNLLSRDYETRNILVIASTHIPQKVDPALIAPNKLNTCIKIRRLLIPQQRKHFFTLSYTRGFHLEKKMFHTNGFGSITMGSNARDLVALTNEALSISITQKKSIIDTNTIRSALHRQIWDLRSQVRSVQDHGILFYQIGRAVAQNVLLSNCPIDPISIYMKKKSCNEVDFYLYNWYFELGTSMKKLTILLYLLSCSAGSVTQDLWSLPGPDEKNGITPYGLVENDSGLVRGLLEVEGALVGSSRTCSQFDKDRVTLLLRPEPRNPLDMMQKGSCSILDQRFLYEKDESEFEEGEGALDRQQIEEDLFNHIVWAPRIWRPWGFLFDCIERPNELGFPYWSRSFRGKRIIYDKEDELQENDSEFLQSGTAQYQTRDRSSKEQGLFRISQFIWDPADPLFFLFKAQPFVSVFSHRELFADEEMSKGLLTPQTNPPTSLYKRWFIKKTQEKHFELLINRQRWLRTNRSLSNGSFRSNTLSESYQYLSNLFLSNGTLLDQMTKALLRKRWLFPDEMQIGFMEQEKDFPFLSRKDMWP.

ATP is bound at residue 1466–1473; sequence GSIGTGRS.

Belongs to the Ycf2 family.

Its subcellular location is the plastid. The protein localises to the chloroplast stroma. Probable ATPase of unknown function. Its presence in a non-photosynthetic plant (Epifagus virginiana) and experiments in tobacco indicate that it has an essential function which is probably not related to photosynthesis. The sequence is that of Protein Ycf2 from Helianthus annuus (Common sunflower).